The following is a 527-amino-acid chain: Chorismate synthase (527 aa).

Residues H17, H104, and D485 contribute to the active site.

This sequence belongs to the chorismate synthase family.

The protein localises to the cytoplasm. The protein resides in the cytosol. It carries out the reaction 5-O-(1-carboxyvinyl)-3-phosphoshikimate = chorismate + phosphate. The catalysed reaction is FMNH2 + NADP(+) = FMN + NADPH + 2 H(+). It functions in the pathway metabolic intermediate biosynthesis; chorismate biosynthesis; chorismate from D-erythrose 4-phosphate and phosphoenolpyruvate: step 7/7. In terms of biological role, bifunctional chorismate synthase and flavin reductase. Catalyzes the conversion of 5-enolpyruvylshikimate 3-phosphate (EPSP) to form chorismate. Acts also as a flavin reductase (FR) able to generate reduced flavin mononucleotide in the presence of NADPH. This chain is Chorismate synthase, found in Plasmodium falciparum (isolate 3D7).